The sequence spans 390 residues: Succinyl-diaminopimelate desuccinylase (390 aa).

His75 provides a ligand contact to Zn(2+). Asp77 is a catalytic residue. Zn(2+) is bound at residue Asp108. Glu141 acts as the Proton acceptor in catalysis. 3 residues coordinate Zn(2+): Glu142, Glu170, and His359.

The protein belongs to the peptidase M20A family. DapE subfamily. As to quaternary structure, homodimer. Zn(2+) is required as a cofactor. It depends on Co(2+) as a cofactor.

It carries out the reaction N-succinyl-(2S,6S)-2,6-diaminopimelate + H2O = (2S,6S)-2,6-diaminopimelate + succinate. It functions in the pathway amino-acid biosynthesis; L-lysine biosynthesis via DAP pathway; LL-2,6-diaminopimelate from (S)-tetrahydrodipicolinate (succinylase route): step 3/3. Its function is as follows. Catalyzes the hydrolysis of N-succinyl-L,L-diaminopimelic acid (SDAP), forming succinate and LL-2,6-diaminopimelate (DAP), an intermediate involved in the bacterial biosynthesis of lysine and meso-diaminopimelic acid, an essential component of bacterial cell walls. The protein is Succinyl-diaminopimelate desuccinylase of Maricaulis maris (strain MCS10) (Caulobacter maris).